We begin with the raw amino-acid sequence, 299 residues long: Zinc finger protein 414 (299 aa).

2 stretches are compositionally biased toward polar residues: residues 1 to 20 (MEEL…SSSN) and 70 to 80 (SCQTSSTTRGV). Residues 1 to 102 (MEELSGPSSD…PPPGKQIPCS (102 aa)) form a disordered region. 2 C2H2-type zinc fingers span residues 99-123 (IPCS…LRTH) and 135-159 (FRCS…GKLH). The segment at 166-190 (FKCENCLLRFRTHRSLFKHLHVCID) adopts a C2H2-type 3; degenerate zinc-finger fold. Disordered stretches follow at residues 193–228 (QNPA…PFPL) and 254–299 (PRLR…GACR). Residues 203-215 (LDKEPPVPERPPE) show a composition bias toward basic and acidic residues. The span at 217–228 (DPSSSLGLPFPL) shows a compositional bias: low complexity. The span at 268–285 (TSSTAIWKKSQGATSSPR) shows a compositional bias: polar residues.

Belongs to the krueppel C2H2-type zinc-finger protein family.

The protein resides in the nucleus. Functionally, may be involved in transcriptional regulation. This Rattus norvegicus (Rat) protein is Zinc finger protein 414 (Znf414).